Reading from the N-terminus, the 336-residue chain is Tetraacyldisaccharide 4'-kinase (336 aa).

60-67 (TVGGTGKT) serves as a coordination point for ATP.

This sequence belongs to the LpxK family.

The enzyme catalyses a lipid A disaccharide + ATP = a lipid IVA + ADP + H(+). It functions in the pathway glycolipid biosynthesis; lipid IV(A) biosynthesis; lipid IV(A) from (3R)-3-hydroxytetradecanoyl-[acyl-carrier-protein] and UDP-N-acetyl-alpha-D-glucosamine: step 6/6. Its function is as follows. Transfers the gamma-phosphate of ATP to the 4'-position of a tetraacyldisaccharide 1-phosphate intermediate (termed DS-1-P) to form tetraacyldisaccharide 1,4'-bis-phosphate (lipid IVA). The chain is Tetraacyldisaccharide 4'-kinase from Pseudomonas fluorescens (strain Pf0-1).